A 35-amino-acid polypeptide reads, in one-letter code: MSDIN-like toxin proprotein 1 (35 aa).

The propeptide occupies 1–10; it reads MSDINATRLP. The cyclopeptide (Ile-Pro) cross-link spans 11 to 20; it reads IIIVLGLIIP. Positions 21 to 35 are excised as a propeptide; the sequence is LCVSDIEMILTRGER.

This sequence belongs to the MSDIN fungal toxin family. Processed by the macrocyclase-peptidase enzyme POPB to yield a toxic cyclic decapeptide. POPB first removes 10 residues from the N-terminus. Conformational trapping of the remaining peptide forces the enzyme to release this intermediate rather than proceed to macrocyclization. The enzyme rebinds the remaining peptide in a different conformation and catalyzes macrocyclization of the N-terminal 10 residues.

In terms of biological role, probable toxin that belongs to the MSDIN-like toxin family responsible for a large number of food poisoning cases and deaths. The protein is MSDIN-like toxin proprotein 1 of Amanita rimosa.